The sequence spans 204 residues: E2 ubiquitin-conjugating enzyme PEX4 (204 aa).

The UBC core domain occupies 2–196 (SAEKRLLQEY…IEYYVGRYSI (195 aa)). Residue C133 is the Glycyl thioester intermediate of the active site.

It belongs to the ubiquitin-conjugating enzyme family.

Its subcellular location is the peroxisome membrane. It catalyses the reaction S-ubiquitinyl-[E1 ubiquitin-activating enzyme]-L-cysteine + [E2 ubiquitin-conjugating enzyme]-L-cysteine = [E1 ubiquitin-activating enzyme]-L-cysteine + S-ubiquitinyl-[E2 ubiquitin-conjugating enzyme]-L-cysteine.. It participates in protein modification; protein ubiquitination. In terms of biological role, E2 ubiquitin-conjugating enzyme involved in peroxisome biosynthesis. Acts late in peroxisomal matrix protein import, after matrix protein translocation. Required for both monoubiquitination and polyubiquitination of coreceptor PEX20. polyubiquitination of PEX20 at conserved lysine 'Lys-19' near the N-terminus leads to its and proteasomal degradation, whereas a monoubiquitination at the conserved cysteine 'Cys-8' is essential for its recycling. This Komagataella phaffii (strain GS115 / ATCC 20864) (Yeast) protein is E2 ubiquitin-conjugating enzyme PEX4.